The chain runs to 138 residues: Superoxide dismutase [Mn] (138 aa).

4 residues coordinate Mn(2+): histidine 2, histidine 49, aspartate 133, and histidine 137.

It belongs to the iron/manganese superoxide dismutase family. It depends on Mn(2+) as a cofactor.

The catalysed reaction is 2 superoxide + 2 H(+) = H2O2 + O2. Destroys superoxide anion radicals which are normally produced within the cells and which are toxic to biological systems. The protein is Superoxide dismutase [Mn] (sodA) of Mycolicibacterium phlei (Mycobacterium phlei).